A 241-amino-acid chain; its full sequence is Protein-L-isoaspartate O-methyltransferase (241 aa).

Residue Ser-69 is part of the active site.

Belongs to the methyltransferase superfamily. L-isoaspartyl/D-aspartyl protein methyltransferase family.

It is found in the cytoplasm. It carries out the reaction [protein]-L-isoaspartate + S-adenosyl-L-methionine = [protein]-L-isoaspartate alpha-methyl ester + S-adenosyl-L-homocysteine. Its function is as follows. Catalyzes the methyl esterification of L-isoaspartyl residues in peptides and proteins that result from spontaneous decomposition of normal L-aspartyl and L-asparaginyl residues. It plays a role in the repair and/or degradation of damaged proteins. The chain is Protein-L-isoaspartate O-methyltransferase from Hyperthermus butylicus (strain DSM 5456 / JCM 9403 / PLM1-5).